Reading from the N-terminus, the 157-residue chain is Transmembrane protein 50A (157 aa).

Ser2 is subject to N-acetylserine. Ser2 carries the phosphoserine modification. 4 helical membrane-spanning segments follow: residues 26–46 (IAAGVLFFTGWWIIIDAAVIY), 58–78 (ACGVIATIAFLMINAVSNGQV), 95–115 (IWLFVGFMLAFGSLIASMWIL), and 126–146 (IVYPGIAVFFQNAFIFFGGLV).

It belongs to the UPF0220 family.

The protein localises to the membrane. This Homo sapiens (Human) protein is Transmembrane protein 50A (TMEM50A).